We begin with the raw amino-acid sequence, 20 residues long: Pregnancy-associated glycoprotein 75 (20 aa).

This sequence belongs to the peptidase A1 family. In terms of processing, N-glycosylated. In terms of tissue distribution, expressed in chorionic epithelium (trophectoderm).

Its subcellular location is the secreted. The polypeptide is Pregnancy-associated glycoprotein 75 (Bubalus bubalis (Domestic water buffalo)).